Here is a 746-residue protein sequence, read N- to C-terminus: Histone-lysine N-methyltransferase EZH2 (746 aa).

An interaction with DNMT1, DNMT3A and DNMT3B region spans residues 1–340; it reads MGQTGKKSEK…AKEFAAALTA (340 aa). The residue at position 21 (serine 21) is a Phosphoserine; by PKB/AKT1. Residues 39–68 are interaction with EED; that stretch reads KSMFSSNRQKILERTEILNQEWKQRRIQPV. Serine 75 carries an O-linked (GlcNAc) serine glycan. Position 76 is a phosphoserine (serine 76). Residues 180 to 222 are disordered; the sequence is QYNDDDDDDDGDDPEEREEKQKDLEDHRDDKESRPPRKFPSDK. The segment covering 182 to 195 has biased composition (acidic residues); that stretch reads NDDDDDDDGDDPEE. A compositionally biased stretch (basic and acidic residues) spans 196-222; sequence REEKQKDLEDHRDDKESRPPRKFPSDK. The segment at 329–522 is interaction with CDYL; the sequence is EGAKEFAAAL…SSNHVYNYQP (194 aa). Threonine 339 carries the post-translational modification Phosphothreonine. The segment at 340–426 is disordered; that stretch reads AERIKTPPKR…PIKMKPNIEP (87 aa). Residue threonine 345 is modified to Phosphothreonine; by CDK1 and CDK2. Residues 345 to 357 show a composition bias toward basic residues; the sequence is TPPKRPGGRRRGR. A phosphoserine mark is found at serine 363 and serine 366. At threonine 367 the chain carries Phosphothreonine. The segment covering 374–385 has biased composition (basic and acidic residues); it reads ESKDTDSDREAG. Threonine 487 is modified (phosphothreonine). One can recognise a CXC domain in the interval 503 to 605; sequence CRKIQLKKDG…SKNVSCKNCS (103 aa). Residues 612 to 727 form the SET domain; it reads KHLLLAPSDV…TGEELFFDYR (116 aa). Lysine 634 is covalently cross-linked (Glycyl lysine isopeptide (Lys-Gly) (interchain with G-Cter in SUMO2)).

Belongs to the class V-like SAM-binding methyltransferase superfamily. Histone-lysine methyltransferase family. EZ subfamily. Component of the PRC2/EED-EZH2 complex, which includes EED, EZH2, SUZ12, RBBP4 and RBBP7 and possibly AEBP2. The minimum components required for methyltransferase activity of the PRC2/EED-EZH2 complex are EED, EZH2 and SUZ12. The PRC2 complex may also interact with DNMT1, DNMT3A, DNMT3B and PHF1 via the EZH2 subunit and with SIRT1 via the SUZ12 subunit. Interacts with HDAC1 and HDAC2. Binds ATRX via the SET domain. Interacts with PRAME. Interacts with CDYL. Interacts with CLOCK, BMAL1 and CRY1. Interacts with DNMT3L; the interaction is direct. Interacts with EZHIP; the interaction blocks EZH2 methyltransferase activity. Interacts with ZNF263; recruited to the SIX3 promoter along with other proteins involved in chromatin modification and transcriptional corepression where it contributes to transcriptional repression. Interacts with ARMC12. Interacts with ZMYND8; the interaction is dependent on the presence of chromatin. Interacts with DDX18; this interaction inhibits the PRC2 complex. Phosphorylated by AKT1. Phosphorylation by AKT1 reduces methyltransferase activity. Phosphorylation at Thr-345 by CDK1 and CDK2 promotes maintenance of H3K27me3 levels at EZH2-target loci, thus leading to epigenetic gene silencing. In terms of processing, sumoylated. Post-translationally, glycosylated: O-GlcNAcylation at Ser-75 by OGT increases stability of EZH2 and facilitates the formation of H3K27me3 by the PRC2/EED-EZH2 complex. In the ovary, expressed in primordial follicles and oocytes and also in external follicle cells (at protein level). Expressed in many tissues. Overexpressed in numerous tumor types including carcinomas of the breast, colon, larynx, lymphoma and testis.

The protein resides in the nucleus. The catalysed reaction is L-lysyl(27)-[histone H3] + 3 S-adenosyl-L-methionine = N(6),N(6),N(6)-trimethyl-L-lysyl(27)-[histone H3] + 3 S-adenosyl-L-homocysteine + 3 H(+). Functionally, polycomb group (PcG) protein. Catalytic subunit of the PRC2/EED-EZH2 complex, which methylates 'Lys-9' (H3K9me) and 'Lys-27' (H3K27me) of histone H3, leading to transcriptional repression of the affected target gene. Able to mono-, di- and trimethylate 'Lys-27' of histone H3 to form H3K27me1, H3K27me2 and H3K27me3, respectively. Displays a preference for substrates with less methylation, loses activity when progressively more methyl groups are incorporated into H3K27, H3K27me0 &gt; H3K27me1 &gt; H3K27me2. Compared to EZH1-containing complexes, it is more abundant in embryonic stem cells and plays a major role in forming H3K27me3, which is required for embryonic stem cell identity and proper differentiation. The PRC2/EED-EZH2 complex may also serve as a recruiting platform for DNA methyltransferases, thereby linking two epigenetic repression systems. Genes repressed by the PRC2/EED-EZH2 complex include HOXC8, HOXA9, MYT1, CDKN2A and retinoic acid target genes. EZH2 can also methylate non-histone proteins such as the transcription factor GATA4 and the nuclear receptor RORA. Regulates the circadian clock via histone methylation at the promoter of the circadian genes. Essential for the CRY1/2-mediated repression of the transcriptional activation of PER1/2 by the CLOCK-BMAL1 heterodimer; involved in the di and trimethylation of 'Lys-27' of histone H3 on PER1/2 promoters which is necessary for the CRY1/2 proteins to inhibit transcription. The protein is Histone-lysine N-methyltransferase EZH2 of Homo sapiens (Human).